A 328-amino-acid chain; its full sequence is ATP synthase mitochondrial F1 complex assembly factor 1 (328 aa).

A mitochondrion-targeting transit peptide spans 1–57; sequence MAAVVVAAAGGAGPAVLQVAGLYRGLCAVRSRALGLGLVSPAQLRVFPVRPGSGRPE.

Belongs to the ATP11 family. Interacts with ATP5F1B; involved in the assembly of the F1 component of the mitochondrial ATP synthase (ATPase). Weakly expressed in muscle.

The protein resides in the mitochondrion inner membrane. Has a complex stabilizing activity in the assembly of the mitochondrial F1-F0 complex. The protein is ATP synthase mitochondrial F1 complex assembly factor 1 of Homo sapiens (Human).